Reading from the N-terminus, the 110-residue chain is UPF0060 membrane protein Dtpsy_1668 (110 aa).

The next 4 helical transmembrane spans lie at 7 to 27 (LALFLLTAVAEIVGCYLPWLW), 33 to 53 (SAWLLVPAAASLALFAWLLTL), 63 to 83 (AAYGGVYVAVALVWLWTVDGV), and 86 to 106 (GPWDWLGVSVTLCGMAIIAFA).

It belongs to the UPF0060 family.

It localises to the cell inner membrane. This is UPF0060 membrane protein Dtpsy_1668 from Acidovorax ebreus (strain TPSY) (Diaphorobacter sp. (strain TPSY)).